A 476-amino-acid chain; its full sequence is Surface membrane glycoprotein GP46/M-2 (476 aa).

Residues 1–32 form the signal peptide; sequence MAQCVRRLVLAAPLAAVVALLLCTSSAPVARA. 4 tandem repeats follow at residues 107 to 130, 131 to 154, 155 to 178, and 179 to 202. The interval 107-202 is 4 X 24 AA tandem repeats; sequence VMILALDFGA…FCGCVPDSWR (96 aa). 2 disordered regions span residues 231 to 255 and 348 to 370; these read APGT…PSPG and ALSP…RRRA. C452 carries GPI-anchor amidated cysteine lipidation. Positions 453–476 are cleaved as a propeptide — removed in mature form; the sequence is PALFDGARLRCCALVVCAGAAPAG.

The protein resides in the cell membrane. The protein is Surface membrane glycoprotein GP46/M-2 of Leishmania amazonensis.